We begin with the raw amino-acid sequence, 227 residues long: MENLDEVQWRSPEWIQAHQGLRTDNVLDYFAESPFYDRVSNNQVLRMQTQFNQQQTGQLTPQHFEQELQKMTGIEFVITHVREPDLWVIKKQNRLNPQQTTPISTYFVINENVYMAPTVAAIMQSRVLSTSMFLKRALEEAIELPSYSPSQGYTYEDSQLTTAGDDDSTPQASKAELGLLERSFRAAISGQQKYVSDIAPISSQSESAASSVPGTPVLKGRKLPLKK.

Positions 149–162 (PSQGYTYEDSQLTT) are enriched in polar residues. 2 disordered regions span residues 149–172 (PSQG…TPQA) and 204–227 (QSES…PLKK).

It belongs to the Mediator complex subunit 6 family. As to quaternary structure, component of the Mediator complex.

It localises to the nucleus. In terms of biological role, component of the Mediator complex, a coactivator involved in the regulated transcription of nearly all RNA polymerase II-dependent genes. Mediator functions as a bridge to convey information from gene-specific regulatory proteins to the basal RNA polymerase II transcription machinery. Mediator is recruited to promoters by direct interactions with regulatory proteins and serves as a scaffold for the assembly of a functional preinitiation complex with RNA polymerase II and the general transcription factors. The sequence is that of Mediator of RNA polymerase II transcription subunit 6 (MED6) from Yarrowia lipolytica (strain CLIB 122 / E 150) (Yeast).